The sequence spans 127 residues: Large ribosomal subunit protein bL17 (127 aa).

Belongs to the bacterial ribosomal protein bL17 family. In terms of assembly, part of the 50S ribosomal subunit. Contacts protein L32.

This Legionella pneumophila (strain Lens) protein is Large ribosomal subunit protein bL17.